Reading from the N-terminus, the 393-residue chain is Sugar efflux transporter A (393 aa).

12 consecutive transmembrane segments (helical) span residues 22 to 42, 51 to 71, 82 to 102, 107 to 127, 152 to 172, 174 to 194, 219 to 239, 253 to 273, 287 to 307, 308 to 328, 344 to 364, and 366 to 386; these read VIAF…SLFL, FMVG…SQIL, KTLI…YAWN, VLLF…PQLF, ISLS…GFGF, AMYL…WLLL, LLLF…LINM, LAGV…LLAG, LAVI…GSWA, LLAL…MGML, LFTN…GIVA, and VWSY…AAVC.

The protein belongs to the major facilitator superfamily. Set transporter family.

Its subcellular location is the cell inner membrane. Functionally, involved in the efflux of sugars. The physiological role may be the reduction of the intracellular concentration of toxic sugars or sugar metabolites. Transports IPTG, lactose and arabinose. This is Sugar efflux transporter A (sotA) from Dickeya chrysanthemi (Pectobacterium chrysanthemi).